The chain runs to 303 residues: GTP cyclohydrolase FolE2 (303 aa).

It belongs to the GTP cyclohydrolase IV family.

The catalysed reaction is GTP + H2O = 7,8-dihydroneopterin 3'-triphosphate + formate + H(+). The protein operates within cofactor biosynthesis; 7,8-dihydroneopterin triphosphate biosynthesis; 7,8-dihydroneopterin triphosphate from GTP: step 1/1. Functionally, converts GTP to 7,8-dihydroneopterin triphosphate. The chain is GTP cyclohydrolase FolE2 from Exiguobacterium sp. (strain ATCC BAA-1283 / AT1b).